We begin with the raw amino-acid sequence, 111 residues long: Nucleoid-associated protein CYB_2894 (111 aa).

It belongs to the YbaB/EbfC family. Homodimer.

The protein localises to the cytoplasm. Its subcellular location is the nucleoid. Binds to DNA and alters its conformation. May be involved in regulation of gene expression, nucleoid organization and DNA protection. This Synechococcus sp. (strain JA-2-3B'a(2-13)) (Cyanobacteria bacterium Yellowstone B-Prime) protein is Nucleoid-associated protein CYB_2894.